We begin with the raw amino-acid sequence, 138 residues long: Basic phospholipase A2 homolog G6K49 (138 aa).

Positions 1–16 (MRTLWIMAVLLLGVEG) are cleaved as a signal peptide. Intrachain disulfides connect cysteine 42–cysteine 132, cysteine 44–cysteine 60, cysteine 59–cysteine 112, cysteine 65–cysteine 138, cysteine 66–cysteine 105, cysteine 73–cysteine 98, and cysteine 91–cysteine 103. The tract at residues 122–133 (KKHRVTVKFLCK) is important for membrane-damaging activities in eukaryotes and bacteria; heparin-binding.

It belongs to the phospholipase A2 family. Group II subfamily. K49 sub-subfamily. Homodimer; non-covalently linked. In terms of tissue distribution, expressed by the venom gland.

The protein localises to the secreted. Snake venom phospholipase A2 (PLA2) that lacks enzymatic activity. Displays myotoxic activities. A model of myotoxic mechanism has been proposed: an apo Lys49-PLA2 is activated by the entrance of a hydrophobic molecule (e.g. fatty acid) at the hydrophobic channel of the protein leading to a reorientation of a monomer. This reorientation causes a transition between 'inactive' to 'active' states, causing alignment of C-terminal and membrane-docking sites (MDoS) side-by-side and putting the membrane-disruption sites (MDiS) in the same plane, exposed to solvent and in a symmetric position for both monomers. The MDoS region stabilizes the toxin on membrane by the interaction of charged residues with phospholipid head groups. Subsequently, the MDiS region destabilizes the membrane with penetration of hydrophobic residues. This insertion causes a disorganization of the membrane, allowing an uncontrolled influx of ions (i.e. calcium and sodium), and eventually triggering irreversible intracellular alterations and cell death. This Calloselasma rhodostoma (Malayan pit viper) protein is Basic phospholipase A2 homolog G6K49.